The following is a 388-amino-acid chain: PIVSKMALLDDNLSKALKLLADVPLIDGHNDFPYFIRGWFPEQIDSLDCRNVRIAHTDLERLNQGRVGGVFWSAYVPCPDRHAKNDFVVDAQYESLRATMQQIDIIHTLIERYSDRLGLARTSSEVWEVFRSGRIASLIGVEGLHQIANSPGVMRNLYRLGVRYITLTHDSNNLYADSTNSSGPFHGGLSRDGISIVKEMNRIGMMVDLSHTSVATQKHVLAISKAPVIFSHSSCASVTEHPRNSPDDVLDMLKANGGVFMITFIRKPTDAESPTLEKVADHVQHVGDRIGYEHVGIGSDFDGVMLTASGLDDVSKFPLLIAELLKRGVSDHSIKNMIGLNVLRVMDSVEEVSMKMKETGEEMLHEVFEEIWDEKMRDEVRKTRDIFD.

Zn(2+) is bound by residues histidine 29, aspartate 31, and glutamate 142. The substrate site is built by histidine 169, arginine 243, and aspartate 300.

The protein belongs to the metallo-dependent hydrolases superfamily. Peptidase M19 family. Zn(2+) is required as a cofactor.

It carries out the reaction an L-aminoacyl-L-amino acid + H2O = 2 an L-alpha-amino acid. It participates in mycotoxin biosynthesis. Functionally, dipeptidase; part of the gene cluster that mediates the biosynthesis of 11'-deoxyverticillin A, one of the dimeric epipolythiodioxopiperazines (ETPs) from the verticillin family that act as mycotoxins. 11'-deoxyverticillin A is required for normal conidiation. The nonribosomal peptide synthetase verP is speculated to be responsible for condensation of amino acids to form the carbon skeleton of verticillin, whereas the cluster-specific tailoring enzymes are involved in further modifications leading to the production of 11'-deoxyverticillin A. This chain is Dipeptidase verJ, found in Clonostachys rogersoniana.